Reading from the N-terminus, the 313-residue chain is Carbamate kinase 2 (313 aa).

Belongs to the carbamate kinase family.

It localises to the cytoplasm. The catalysed reaction is hydrogencarbonate + NH4(+) + ATP = carbamoyl phosphate + ADP + H2O + H(+). The protein operates within metabolic intermediate metabolism; carbamoyl phosphate degradation; CO(2) and NH(3) from carbamoyl phosphate: step 1/1. This chain is Carbamate kinase 2 (arcC2), found in Staphylococcus aureus (strain USA300).